Here is a 430-residue protein sequence, read N- to C-terminus: tRNA(Ile)-lysidine synthase (430 aa).

Residue 21 to 26 (SGGLDS) coordinates ATP.

Belongs to the tRNA(Ile)-lysidine synthase family.

The protein resides in the cytoplasm. The catalysed reaction is cytidine(34) in tRNA(Ile2) + L-lysine + ATP = lysidine(34) in tRNA(Ile2) + AMP + diphosphate + H(+). Ligates lysine onto the cytidine present at position 34 of the AUA codon-specific tRNA(Ile) that contains the anticodon CAU, in an ATP-dependent manner. Cytidine is converted to lysidine, thus changing the amino acid specificity of the tRNA from methionine to isoleucine. In Salmonella paratyphi B (strain ATCC BAA-1250 / SPB7), this protein is tRNA(Ile)-lysidine synthase.